A 262-amino-acid chain; its full sequence is tRNA pseudouridine synthase A (262 aa).

Asp51 functions as the Nucleophile in the catalytic mechanism. Tyr109 provides a ligand contact to substrate.

The protein belongs to the tRNA pseudouridine synthase TruA family. In terms of assembly, homodimer.

The catalysed reaction is uridine(38/39/40) in tRNA = pseudouridine(38/39/40) in tRNA. In terms of biological role, formation of pseudouridine at positions 38, 39 and 40 in the anticodon stem and loop of transfer RNAs. This chain is tRNA pseudouridine synthase A, found in Actinobacillus pleuropneumoniae serotype 5b (strain L20).